Reading from the N-terminus, the 192-residue chain is Der GTPase-activating protein YihI (192 aa).

Residues 1-80 (MSRTKKTRRI…KAAVKEVKDP (80 aa)) form a disordered region. Composition is skewed to basic and acidic residues over residues 9–25 (RITDIMPARKADKKPEQ), 37–48 (TRYELDAKAREE), and 65–80 (DPAEQKKAAVKEVKDP).

It belongs to the YihI family. As to quaternary structure, interacts with Der.

Functionally, a GTPase-activating protein (GAP) that modifies Der/EngA GTPase function. May play a role in ribosome biogenesis. The protein is Der GTPase-activating protein YihI of Actinobacillus pleuropneumoniae serotype 7 (strain AP76).